Here is a 409-residue protein sequence, read N- to C-terminus: L-cysteine:1D-myo-inositol 2-amino-2-deoxy-alpha-D-glucopyranoside ligase (409 aa).

Cys-43 serves as a coordination point for Zn(2+). Residues 43-46 (CGIT), Thr-58, and 81-83 (NVT) contribute to the L-cysteinyl-5'-AMP site. Residues 45-55 (ITPYDATHMGH) carry the 'HIGH' region motif. Residues 183–188 (ERGGDP) carry the 'ERGGDP' region motif. An L-cysteinyl-5'-AMP-binding site is contributed by Trp-224. Cys-228 lines the Zn(2+) pocket. L-cysteinyl-5'-AMP is bound at residue 246–248 (GSD). Residue His-253 coordinates Zn(2+). Residue Val-280 participates in L-cysteinyl-5'-AMP binding. Residues 286 to 290 (KMSKS) carry the 'KMSKS' region motif.

This sequence belongs to the class-I aminoacyl-tRNA synthetase family. MshC subfamily. As to quaternary structure, monomer. Requires Zn(2+) as cofactor.

The catalysed reaction is 1D-myo-inositol 2-amino-2-deoxy-alpha-D-glucopyranoside + L-cysteine + ATP = 1D-myo-inositol 2-(L-cysteinylamino)-2-deoxy-alpha-D-glucopyranoside + AMP + diphosphate + H(+). In terms of biological role, catalyzes the ATP-dependent condensation of GlcN-Ins and L-cysteine to form L-Cys-GlcN-Ins. The chain is L-cysteine:1D-myo-inositol 2-amino-2-deoxy-alpha-D-glucopyranoside ligase from Streptomyces griseus subsp. griseus (strain JCM 4626 / CBS 651.72 / NBRC 13350 / KCC S-0626 / ISP 5235).